A 313-amino-acid polypeptide reads, in one-letter code: Ribosomal RNA small subunit methyltransferase H (313 aa).

S-adenosyl-L-methionine-binding positions include 35-37 (GGH), D55, F79, D101, and Q108.

Belongs to the methyltransferase superfamily. RsmH family.

It localises to the cytoplasm. The catalysed reaction is cytidine(1402) in 16S rRNA + S-adenosyl-L-methionine = N(4)-methylcytidine(1402) in 16S rRNA + S-adenosyl-L-homocysteine + H(+). Functionally, specifically methylates the N4 position of cytidine in position 1402 (C1402) of 16S rRNA. The chain is Ribosomal RNA small subunit methyltransferase H from Shigella flexneri.